The following is a 63-amino-acid chain: Large ribosomal subunit protein bL28 (63 aa).

It belongs to the bacterial ribosomal protein bL28 family.

The polypeptide is Large ribosomal subunit protein bL28 (Thermomicrobium roseum (strain ATCC 27502 / DSM 5159 / P-2)).